The chain runs to 167 residues: Thiol peroxidase (167 aa).

The Thioredoxin domain occupies 18–167 (VKVGDQAPDF…PIEAAKALVK (150 aa)). C60 acts as the Cysteine sulfenic acid (-SOH) intermediate in catalysis. A disulfide bridge connects residues C60 and C94.

The protein belongs to the peroxiredoxin family. Tpx subfamily. Homodimer.

The enzyme catalyses a hydroperoxide + [thioredoxin]-dithiol = an alcohol + [thioredoxin]-disulfide + H2O. Thiol-specific peroxidase that catalyzes the reduction of hydrogen peroxide and organic hydroperoxides to water and alcohols, respectively. Plays a role in cell protection against oxidative stress by detoxifying peroxides. This chain is Thiol peroxidase, found in Bacillus subtilis (strain 168).